The chain runs to 55 residues: Seripauperin-7 (55 aa).

The signal sequence occupies residues 1-20; sequence MVKLTSIAAGVAAIAAGASA.

It belongs to the SRP1/TIP1 family. Seripauperin subfamily.

In Saccharomyces cerevisiae (strain ATCC 204508 / S288c) (Baker's yeast), this protein is Seripauperin-7 (PAU7).